Consider the following 912-residue polypeptide: Transferrin-binding protein A (912 aa).

Residues 1 to 23 (MTKKPYFRLSIISCLLISCYVKA) form the signal peptide. A TonB box motif is present at residues 50–57 (ETISVTAE). Residues 63-188 (KDNEVTGLGK…LAGSVTFQSK (126 aa)) form the TBDR plug domain. The region spanning 199-912 (SWGIQTKNAY…NYTLTLEMKF (714 aa)) is the TBDR beta-barrel domain. Positions 895-912 (TRYAASGRNYTLTLEMKF) match the TonB C-terminal box motif.

Belongs to the TonB-dependent receptor family.

The protein resides in the cell outer membrane. In terms of biological role, haemophilus acquires iron by extracting it from serum transferrin (TF) in its human host. Acts as a transferrin receptor and is required for transferrin utilization. This Haemophilus influenzae (strain ATCC 51907 / DSM 11121 / KW20 / Rd) protein is Transferrin-binding protein A.